A 115-amino-acid chain; its full sequence is Protamine-2 (115 aa).

Residues 1–115 form a disordered region; it reads MVRCHVKSPT…RRRRRCGRQL (115 aa). The residue at position 8 (serine 8) is a Phosphoserine. Over residues 24–38 the composition is skewed to basic and acidic residues; sequence ETEHPDQARELRPED. Basic residues-rich tracts occupy residues 44–79 and 102–115; these read RTHR…RRRG and RRMR…GRQL.

Belongs to the protamine P2 family. Interacts with TDRP. In terms of processing, proteolytic processing into mature chains is required for histone eviction during spermatogenesis. Transition proteins (TNP1 and TNP2) are required for processing. As to expression, testis.

The protein localises to the nucleus. Its subcellular location is the chromosome. Protamines substitute for histones in the chromatin of sperm during the haploid phase of spermatogenesis. They compact sperm DNA into a highly condensed, stable and inactive complex. The chain is Protamine-2 (PRM2) from Bos taurus (Bovine).